Consider the following 203-residue polypeptide: MNVSLYYSGTPVSSHSLLSKNGLSNIVLTCKDLPIPIDLLSLFFDILNERHPSFDEHMFLQMIRKPDDPENLSVFLKSAIWMLSHKRDLPGHYRLPLTCLVSTYSEYFVELKPRQPSTKCWFCKIAKDGLPFRVEGVHGFPSEAELYIVPSKEHAIESFEVLSGKKLYRSPSKKKHGYLIASNKPPLTSKYVEYDPSKPDTKP.

This sequence belongs to the tenuiviruses p3 protein family. Homodimer.

It localises to the host cytoplasm. In terms of biological role, acts as a suppressor of RNA-mediated gene silencing, also known as post-transcriptional gene silencing (PTGS), presumably through the binding of dsRNA. The polypeptide is Suppressor of RNA silencing p3 (Oryza sativa (Rice)).